The following is a 689-amino-acid chain: Glycine--tRNA ligase beta subunit (689 aa).

Belongs to the class-II aminoacyl-tRNA synthetase family. Tetramer of two alpha and two beta subunits.

It localises to the cytoplasm. It catalyses the reaction tRNA(Gly) + glycine + ATP = glycyl-tRNA(Gly) + AMP + diphosphate. The sequence is that of Glycine--tRNA ligase beta subunit from Cronobacter sakazakii (strain ATCC BAA-894) (Enterobacter sakazakii).